The following is a 546-amino-acid chain: MTPGEIRRLYFIIKTFLSYGLDELIPRMRLTLPLRIWRRGLFWMPNRHKDLELGTRLRLALQELGPVWIKFGQMLSTRRDLFPPVIADQLALLQDRVAPFDGKLAKQQIEKAMGDRPVEEWFDDFDITPLASASIAQVHTARLKENGKEVVIKVIRPDILPVIKADMKLIYRLARWVPRLLPDGRRLRPMEVVREYEKTLLDELDLLREAANAIQLRRNFENSPMLYVPEVYSDYCSPTMMVMERIYGIPVNDVAALEANGTDMKLLAERGVQVFFTQVFRDSFFHGDMHPGNIFVSHDHPHDPQYIGIDCGIVGSLNKEDKRYLAENFIAFFNRDYRRVAELHVDSGWVPPDTNVEEFESAIRTVCEPIFEKPLAEISFGHVLLNLFNTARRFNMEVQPQLVLLQKTLLYIEGVGRQLYPQLDLWKTAKPFLESWIKDQVGFPALVRSFKEKAPFWAEKIPEIPELVYNSLRQGKQLQQSVDKIAHELQEHRVKQGQSRYLFGIGATLMLSSTLLFINRPDWGMSPGWLMAGGILVWLIGWRRTD.

One can recognise a Protein kinase domain in the interval 124-502 (DFDITPLASA…RVKQGQSRYL (379 aa)). Residues 130–138 (LASASIAQV) and lysine 153 each bind ATP. Aspartate 288 (proton acceptor) is an active-site residue. The next 2 membrane-spanning stretches (helical) occupy residues 501–518 (YLFG…LLFI) and 523–542 (WGMS…LIGW).

The protein belongs to the ABC1 family. UbiB subfamily.

It localises to the cell inner membrane. It participates in cofactor biosynthesis; ubiquinone biosynthesis [regulation]. Is probably a protein kinase regulator of UbiI activity which is involved in aerobic coenzyme Q (ubiquinone) biosynthesis. This Cronobacter sakazakii (strain ATCC BAA-894) (Enterobacter sakazakii) protein is Probable protein kinase UbiB.